We begin with the raw amino-acid sequence, 358 residues long: 3-dehydroquinate synthase (358 aa).

Residues Asp-70–Lys-75, Gly-104–Asp-108, Thr-128–Thr-129, Lys-141, Lys-150, and Cys-168–Thr-171 contribute to the NAD(+) site. Residues Glu-183, His-246, and His-263 each contribute to the Zn(2+) site.

It belongs to the sugar phosphate cyclases superfamily. Dehydroquinate synthase family. Requires Co(2+) as cofactor. Zn(2+) serves as cofactor. NAD(+) is required as a cofactor.

It localises to the cytoplasm. The catalysed reaction is 7-phospho-2-dehydro-3-deoxy-D-arabino-heptonate = 3-dehydroquinate + phosphate. Its pathway is metabolic intermediate biosynthesis; chorismate biosynthesis; chorismate from D-erythrose 4-phosphate and phosphoenolpyruvate: step 2/7. In terms of biological role, catalyzes the conversion of 3-deoxy-D-arabino-heptulosonate 7-phosphate (DAHP) to dehydroquinate (DHQ). In Shewanella baltica (strain OS155 / ATCC BAA-1091), this protein is 3-dehydroquinate synthase.